The chain runs to 497 residues: Intermediate filament protein A (497 aa).

The interval 1–32 is coil 1A; sequence MSDLNDRLASYIEKVRFLEAQNRKLAADLDLL. The IF rod domain maps to 1–342; that stretch reads MSDLNDRLAS…KMLEGEENRA (342 aa). Residues 33–46 are linker 1; that stretch reads RGRWGKDTLSVRAM. The tract at residues 47 to 184 is coil 1B; it reads YEGELQEARK…RVHDQEIAEL (138 aa). Positions 185–202 are linker 12; sequence QAMASRDTTPENREYFKN. Residues 203–342 form a coil 2 region; sequence ELASAIRDIR…KMLEGEENRA (140 aa). The interval 343-497 is tail; the sequence is GLRQLVEQVV…THIQRSSHTI (155 aa). Residues 375–493 enclose the LTD domain; sequence SRTSFQRSAK…EERATHIQRS (119 aa).

The protein belongs to the intermediate filament family. An and B can form homopolymers. Giant body muscle cells.

The protein resides in the cytoplasm. The chain is Intermediate filament protein A from Ascaris suum (Pig roundworm).